Here is an 83-residue protein sequence, read N- to C-terminus: Small ribosomal subunit protein eS21 (83 aa).

This sequence belongs to the eukaryotic ribosomal protein eS21 family. As to quaternary structure, component of the 40S small ribosomal subunit. Interacts with sta.

It localises to the cytoplasm. It is found in the cytosol. The protein localises to the rough endoplasmic reticulum. The sequence is that of Small ribosomal subunit protein eS21 (RpS21) from Ceratitis capitata (Mediterranean fruit fly).